A 743-amino-acid chain; its full sequence is FHF complex subunit HOOK-interacting protein 2B (743 aa).

A disordered region spans residues cysteine 186 to serine 219. Basic and acidic residues predominate over residues threonine 196 to histidine 206.

This sequence belongs to the FHIP family. In terms of tissue distribution, expressed in liver.

In terms of biological role, able to activate MAPK/ERK and TGFB signaling pathways. May regulate the activity of genes involved in intestinal barrier function and immunoprotective inflammation. May play a role in cell proliferation. This is FHF complex subunit HOOK-interacting protein 2B from Homo sapiens (Human).